A 144-amino-acid polypeptide reads, in one-letter code: tRNA-specific adenosine deaminase (144 aa).

Residues 1–116 enclose the CMP/dCMP-type deaminase domain; it reads MEQALKQAGI…SNLRYFNSSV (116 aa). H48 contacts Zn(2+). E50 functions as the Proton donor in the catalytic mechanism. Residues C78 and C81 each coordinate Zn(2+).

Belongs to the cytidine and deoxycytidylate deaminase family. Homodimer. The cofactor is Zn(2+).

The catalysed reaction is adenosine(34) in tRNA + H2O + H(+) = inosine(34) in tRNA + NH4(+). Functionally, catalyzes the deamination of adenosine to inosine at the wobble position 34 of tRNA(Arg2). This is tRNA-specific adenosine deaminase from Rickettsia felis (strain ATCC VR-1525 / URRWXCal2) (Rickettsia azadi).